A 322-amino-acid polypeptide reads, in one-letter code: MKKIAVLTSGGDSPGMNAAVRAVVRTAIYNEIEVYGVYHGYQGLLNDDIHKLELGSVGDTIQRGGTFLYSARCPEFKEQEVRKVAIENLRKRGIEGLVVIGGDGSYRGAQRISEECKEIQTIGIPGTIDNDINGTDFTIGFDTALNTIIGLVDKIRDTASSHARTFIIEAMGRDCGDLALWAGLSVGAETIVVPEVKTDIKEIADKIEQGIKRGKKHSIVLVAEGCMTAQDCQKELSQFINVDNRVSVLGHVQRGGSPTGADRVLASRLGGYAVDLLMQGETAKGVGIKNNKIVATSFDEIFDGKDHKFDYSLYELANKLSI.

Glycine 11 is an ATP binding site. 21-25 provides a ligand contact to ADP; it reads RAVVR. ATP is bound by residues 72 to 73 and 102 to 105; these read RC and GDGS. Residue aspartate 103 coordinates Mg(2+). A substrate-binding site is contributed by 127-129; it reads TID. Aspartate 129 functions as the Proton acceptor in the catalytic mechanism. Residue arginine 156 coordinates ADP. Substrate-binding positions include arginine 164 and 171–173; that span reads MGR. ADP is bound by residues 187–189, arginine 213, and 215–217; these read GAE and KKH. Substrate is bound by residues glutamate 224, arginine 245, and 251-254; that span reads HVQR.

It belongs to the phosphofructokinase type A (PFKA) family. ATP-dependent PFK group I subfamily. Prokaryotic clade 'B1' sub-subfamily. As to quaternary structure, homotetramer. Mg(2+) is required as a cofactor.

The protein resides in the cytoplasm. The enzyme catalyses beta-D-fructose 6-phosphate + ATP = beta-D-fructose 1,6-bisphosphate + ADP + H(+). It participates in carbohydrate degradation; glycolysis; D-glyceraldehyde 3-phosphate and glycerone phosphate from D-glucose: step 3/4. Its activity is regulated as follows. Allosterically activated by ADP and other diphosphonucleosides, and allosterically inhibited by phosphoenolpyruvate. Its function is as follows. Catalyzes the phosphorylation of D-fructose 6-phosphate to fructose 1,6-bisphosphate by ATP, the first committing step of glycolysis. The protein is ATP-dependent 6-phosphofructokinase of Staphylococcus aureus (strain MRSA252).